The chain runs to 113 residues: U11-theraphotoxin-Hhn1j (113 aa).

An N-terminal signal peptide occupies residues Met-1–Ala-21. The propeptide occupies Asp-22 to Arg-74. Residues Leu-60–Asn-69 are compositionally biased toward basic and acidic residues. Residues Leu-60–Asp-83 form a disordered region. 3 disulfide bridges follow: Cys-75/Cys-90, Cys-82/Cys-95, and Cys-89/Cys-110.

This sequence belongs to the neurotoxin 14 (magi-1) family. 01 (HNTX-16) subfamily. In terms of tissue distribution, expressed by the venom gland.

Its subcellular location is the secreted. Functionally, probable ion channel inhibitor. The sequence is that of U11-theraphotoxin-Hhn1j from Cyriopagopus hainanus (Chinese bird spider).